A 215-amino-acid chain; its full sequence is Pyrrolidone-carboxylate peptidase (215 aa).

Active-site residues include Glu-80, Cys-143, and His-167.

It belongs to the peptidase C15 family. In terms of assembly, homotetramer.

Its subcellular location is the cytoplasm. It carries out the reaction Release of an N-terminal pyroglutamyl group from a polypeptide, the second amino acid generally not being Pro.. Functionally, removes 5-oxoproline from various penultimate amino acid residues except L-proline. The sequence is that of Pyrrolidone-carboxylate peptidase from Bacillus mycoides (strain KBAB4) (Bacillus weihenstephanensis).